The primary structure comprises 379 residues: Lipoyl synthase 2, mitochondrial (379 aa).

Positions 106, 111, 117, 137, 141, 144, and 352 each coordinate [4Fe-4S] cluster. The Radical SAM core domain maps to 122–341 (EHGTQTATIM…EERGNELGFL (220 aa)).

Belongs to the radical SAM superfamily. Lipoyl synthase family. Requires [4Fe-4S] cluster as cofactor.

Its subcellular location is the mitochondrion. It catalyses the reaction [[Fe-S] cluster scaffold protein carrying a second [4Fe-4S](2+) cluster] + N(6)-octanoyl-L-lysyl-[protein] + 2 oxidized [2Fe-2S]-[ferredoxin] + 2 S-adenosyl-L-methionine + 4 H(+) = [[Fe-S] cluster scaffold protein] + N(6)-[(R)-dihydrolipoyl]-L-lysyl-[protein] + 4 Fe(3+) + 2 hydrogen sulfide + 2 5'-deoxyadenosine + 2 L-methionine + 2 reduced [2Fe-2S]-[ferredoxin]. It participates in protein modification; protein lipoylation via endogenous pathway; protein N(6)-(lipoyl)lysine from octanoyl-[acyl-carrier-protein]: step 2/2. Catalyzes the radical-mediated insertion of two sulfur atoms into the C-6 and C-8 positions of the octanoyl moiety bound to the lipoyl domains of lipoate-dependent enzymes, thereby converting the octanoylated domains into lipoylated derivatives. The polypeptide is Lipoyl synthase 2, mitochondrial (Drosophila yakuba (Fruit fly)).